A 421-amino-acid polypeptide reads, in one-letter code: MFEPVLLRNVDVPDGHLLSTYEAGGGYRALRKALGEYTPDEIVELVKESNLRGRGGAGFPTGMKWSFVPKAAGKPKYLCCNADEGEPGTFKDRIIMERDPHQLIEGLAVSAYAIGAETAYVYIRGEYVTAIRRMEQAIAEAHENGYLGIGILGSGFNFMVHIHRGAGAYICGEETAMLESLEGKRAQPRLKPPFPAVAGLYASPTVINNVETLACVPHIVMRGSAWFRGIGPDRSPGPKLYCLSGQVRKPGLYELPMGISLRELVEEHAGGPLPGRKVKAVIPGGVSAPVIPEGELEVGMDFDSLTAAGSMLGSAGVVVIDDSTCMVKLATRIIEFFHHESCGKCTPCREGLDWTVKVLRRIEAGEGETGDLEQLEMLCKGIFGNTFCALGDGAAMGLRAALKHFRAEFVAHIEERRCPFH.

53–62 is a binding site for NAD(+); sequence GRGGAGFPTG. Residue 165–212 coordinates FMN; it reads GAGAYICGEETAMLESLEGKRAQPRLKPPFPAVAGLYASPTVINNVET. Cysteine 342, cysteine 345, cysteine 348, and cysteine 388 together coordinate [4Fe-4S] cluster.

This sequence belongs to the complex I 51 kDa subunit family. FMN is required as a cofactor. It depends on [4Fe-4S] cluster as a cofactor.

The catalysed reaction is a quinone + NADH + 5 H(+)(in) = a quinol + NAD(+) + 4 H(+)(out). In terms of biological role, NDH-1 shuttles electrons from NADH, via FMN and iron-sulfur (Fe-S) centers, to quinones in the respiratory chain. The immediate electron acceptor for the enzyme in this species is believed to be ubiquinone. Couples the redox reaction to proton translocation (for every two electrons transferred, four hydrogen ions are translocated across the cytoplasmic membrane), and thus conserves the redox energy in a proton gradient. The polypeptide is NADH-quinone oxidoreductase subunit F 2 (nuoF2) (Rhizobium meliloti (strain 1021) (Ensifer meliloti)).